Here is a 469-residue protein sequence, read N- to C-terminus: UDP-N-acetylmuramoylalanine--D-glutamate ligase (469 aa).

123–129 provides a ligand contact to ATP; it reads GTNGKST.

This sequence belongs to the MurCDEF family.

It localises to the cytoplasm. The enzyme catalyses UDP-N-acetyl-alpha-D-muramoyl-L-alanine + D-glutamate + ATP = UDP-N-acetyl-alpha-D-muramoyl-L-alanyl-D-glutamate + ADP + phosphate + H(+). The protein operates within cell wall biogenesis; peptidoglycan biosynthesis. In terms of biological role, cell wall formation. Catalyzes the addition of glutamate to the nucleotide precursor UDP-N-acetylmuramoyl-L-alanine (UMA). This Phenylobacterium zucineum (strain HLK1) protein is UDP-N-acetylmuramoylalanine--D-glutamate ligase.